A 122-amino-acid polypeptide reads, in one-letter code: Large ribosomal subunit protein uL14 (122 aa).

In terms of assembly, forms a cluster with proteins L3 and L19. In the 70S ribosome, L14 and L19 interact and together make contacts with the 16S rRNA in bridges B5 and B8. Part of the 50S ribosomal subunit.

Functionally, binds to 23S rRNA. Forms part of two intersubunit bridges in the 70S ribosome. In Rhodopseudomonas palustris (strain ATCC BAA-98 / CGA009), this protein is Large ribosomal subunit protein uL14.